The sequence spans 207 residues: Nudix hydrolase 4 (207 aa).

The region spanning 58-194 (GYRQVVGCVP…WMREALEAFI (137 aa)) is the Nudix hydrolase domain. Residues 101–122 (GGWETDESMEEAALRETIEEAG) carry the Nudix box motif. Residues glutamate 116 and glutamate 120 each coordinate Mg(2+).

This sequence belongs to the Nudix hydrolase family. Mg(2+) serves as cofactor. The cofactor is Mn(2+). Expressed in roots, stems and leaves.

The enzyme catalyses ADP-D-ribose + H2O = D-ribose 5-phosphate + AMP + 2 H(+). It carries out the reaction NAD(+) + H2O = beta-nicotinamide D-ribonucleotide + AMP + 2 H(+). It catalyses the reaction NADH + H2O = reduced beta-nicotinamide D-ribonucleotide + AMP + 2 H(+). In terms of biological role, probably mediates the hydrolysis of some nucleoside diphosphate derivatives. In vitro, it can use both NADH and ADP-ribose as substrates; however the relevance of such substrates in vivo is unclear. The chain is Nudix hydrolase 4 (NUDT4) from Arabidopsis thaliana (Mouse-ear cress).